Reading from the N-terminus, the 132-residue chain is Replication enhancer protein (132 aa).

Belongs to the geminiviridae replication enhancer protein family. In terms of assembly, homooligomer. Interacts with the replication-associated protein (REP). Interacts with host proliferating cell nuclear antigen (PCNA). Interacts with host retinoblastoma-related protein 1 (RBR1), and may thereby deregulate the host cell cycle. Oligomerization and interaction with PCNA are necessary for optimal replication enhancement.

Increases viral DNA accumulation. Enhances infectivity and symptom expression. This is Replication enhancer protein from Potato yellow mosaic virus (isolate Venezuela) (PYMV).